Consider the following 310-residue polypeptide: Cytosolic Fe-S cluster assembly factor NUBP1 homolog (310 aa).

Residues cysteine 12, cysteine 26, cysteine 29, and cysteine 35 each coordinate [4Fe-4S] cluster. An ATP-binding site is contributed by glycine 66–serine 73. Positions 240 and 243 each coordinate [4Fe-4S] cluster.

This sequence belongs to the Mrp/NBP35 ATP-binding proteins family. NUBP1/NBP35 subfamily. As to quaternary structure, heterotetramer of 2 NUBP1 and 2 NUBP2 chains. The cofactor is [4Fe-4S] cluster.

It is found in the cytoplasm. Component of the cytosolic iron-sulfur (Fe/S) protein assembly (CIA) machinery. Required for maturation of extramitochondrial Fe-S proteins. The NUBP1-NUBP2 heterotetramer forms a Fe-S scaffold complex, mediating the de novo assembly of an Fe-S cluster and its transfer to target apoproteins. In Brugia malayi (Filarial nematode worm), this protein is Cytosolic Fe-S cluster assembly factor NUBP1 homolog.